A 75-amino-acid polypeptide reads, in one-letter code: Sperm-specific protein PL-I (75 aa).

The H15 domain maps to Gly-2–Lys-74.

The protein belongs to the histone H1/H5 family. As to expression, sperm.

It is found in the nucleus. Its subcellular location is the chromosome. In terms of biological role, linker histones are implicated in chromatin remodeling and/or transcriptional regulation during spermiogenesis, the process of spermatid maturation into spermatozoa. This Spisula solidissima (Atlantic surf-clam) protein is Sperm-specific protein PL-I.